Consider the following 150-residue polypeptide: uncharacterized protein (150 aa).

This is an uncharacterized protein from Homo sapiens (Human).